A 145-amino-acid chain; its full sequence is Cytochrome b (145 aa).

A helical membrane pass occupies residues 38–58 (FFALHFLLPFVLAALVIMHLI). Heme b contacts are provided by H42 and H56. H61 lines the a ubiquinone pocket. Residues 85–105 (FVFKDLVTVFIFFIVLSVFVF) traverse the membrane as a helical segment.

This sequence belongs to the cytochrome b family. Fungal cytochrome b-c1 complex contains 10 subunits; 3 respiratory subunits, 2 core proteins and 5 low-molecular weight proteins. Cytochrome b-c1 complex is a homodimer. Requires heme b as cofactor.

It is found in the mitochondrion inner membrane. Functionally, component of the ubiquinol-cytochrome c reductase complex (complex III or cytochrome b-c1 complex) that is part of the mitochondrial respiratory chain. The b-c1 complex mediates electron transfer from ubiquinol to cytochrome c. Contributes to the generation of a proton gradient across the mitochondrial membrane that is then used for ATP synthesis. The sequence is that of Cytochrome b (cob) from Aspergillus fumigatus (Neosartorya fumigata).